Here is a 921-residue protein sequence, read N- to C-terminus: Ribosome-releasing factor 2, mitochondrial (921 aa).

A mitochondrion-targeting transit peptide spans 1-55 (MVSALLLRARQNGRAARCLDYPKVKCWALASLPKSSLEKPGFSQVRRFSVFHPQS). The tr-type G domain occupies 60–368 (DLTRNIGIIA…SVVDLLPSPQ (309 aa)). Residues 69–76 (AHIDAGKT), 152–156 (DTPGH), and 206–209 (NKMD) contribute to the GTP site.

This sequence belongs to the TRAFAC class translation factor GTPase superfamily. Classic translation factor GTPase family. EF-G/EF-2 subfamily.

The protein resides in the mitochondrion. Its function is as follows. Mitochondrial GTPase that mediates the disassembly of ribosomes from messenger RNA at the termination of mitochondrial protein biosynthesis. Not involved in the GTP-dependent ribosomal translocation step during translation elongation. In Emericella nidulans (strain FGSC A4 / ATCC 38163 / CBS 112.46 / NRRL 194 / M139) (Aspergillus nidulans), this protein is Ribosome-releasing factor 2, mitochondrial (mef2).